The sequence spans 212 residues: MNRKKLQKLTDSLTKNCKHFSKFEVKCLINLFYNLVGEVTERQGVIIGLDRNAFRNILHMTFGMTDDMIMDRVFRGFDKDNDGCISVTEWVYGLSVFLRGTLEEKMKYCFEVFDLNGDSFISKEEMFHMLKNSLLKQPSEEDPDEGIKDLVEITLKKMDHDHDGKLSFADYEQAVREETLLLEAFGPCLPDPKSQSEFEAQVFKDPNEFNEV.

EF-hand domains follow at residues 65 to 100 (TDDM…FLRG), 101 to 136 (TLEE…SLLK), and 146 to 181 (GIKD…ETLL). Aspartate 78, aspartate 80, aspartate 82, cysteine 84, glutamate 89, aspartate 114, asparagine 116, aspartate 118, glutamate 125, aspartate 159, aspartate 161, aspartate 163, lysine 165, and aspartate 170 together coordinate Ca(2+).

As to quaternary structure, component of the outer dynein arm-docking complex along with ODAD1, ODAD2, ODAD3 and ODAD4. As to expression, expressed in trachea multiciliated cells.

The protein localises to the cytoplasm. It is found in the cytoskeleton. Its subcellular location is the cilium axoneme. It localises to the cell projection. The protein resides in the cilium. The protein localises to the flagellum. In terms of biological role, component of the outer dynein arm-docking complex (ODA-DC) that mediates outer dynein arms (ODA) binding onto the doublet microtubule. Seems to regulate the assembly of both ODAs and their axonemal docking complex onto ciliary microtubules. Regulates ciliary and flagellar motility and is required for cilia-driven determination of body laterality. The protein is Calaxin (CLXN) of Bos taurus (Bovine).